A 216-amino-acid chain; its full sequence is Ribose-5-phosphate isomerase A (216 aa).

Substrate is bound by residues 26–29 (TGST), 79–82 (DGAD), and 92–95 (KGGG). The Proton acceptor role is filled by E101. Substrate is bound at residue K119.

This sequence belongs to the ribose 5-phosphate isomerase family. Homodimer.

The catalysed reaction is aldehydo-D-ribose 5-phosphate = D-ribulose 5-phosphate. It participates in carbohydrate degradation; pentose phosphate pathway; D-ribose 5-phosphate from D-ribulose 5-phosphate (non-oxidative stage): step 1/1. In terms of biological role, catalyzes the reversible conversion of ribose-5-phosphate to ribulose 5-phosphate. The protein is Ribose-5-phosphate isomerase A of Legionella pneumophila subsp. pneumophila (strain Philadelphia 1 / ATCC 33152 / DSM 7513).